Reading from the N-terminus, the 100-residue chain is Osteocalcin (100 aa).

The first 23 residues, 1-23 (MRALTLLALLALAALCITGQAGA), serve as a signal peptide directing secretion. The propeptide occupies 24–51 (KPSGADSSKGAAFVSKQEGSEVVKRPRR). A Gla domain is found at 52 to 98 (YLYQWLGAPVPYPDPLEPKREVCELNPDCDELADHIGFQEAYRRFYG). The Ca(2+) site is built by E68, E72, E75, and D81. Residues E68, E72, and E75 each carry the 4-carboxyglutamate modification. A disulfide bridge links C74 with C80.

This sequence belongs to the osteocalcin/matrix Gla protein family. Post-translationally, gamma-carboxyglutamate residues are formed by vitamin K dependent carboxylation by GGCX. These residues are essential for the binding of calcium. Decarboxylation promotes the hormone activity.

The protein resides in the secreted. Its function is as follows. The carboxylated form is one of the main organic components of the bone matrix, which constitutes 1-2% of the total bone protein: it acts as a negative regulator of bone formation and is required to limit bone formation without impairing bone resorption or mineralization. The carboxylated form binds strongly to apatite and calcium. In terms of biological role, the uncarboxylated form acts as a hormone secreted by osteoblasts, which regulates different cellular processes, such as energy metabolism, male fertility and brain development. Regulates of energy metabolism by acting as a hormone favoring pancreatic beta-cell proliferation, insulin secretion and sensitivity and energy expenditure. Uncarboxylated osteocalcin hormone also promotes testosterone production in the testes: acts as a ligand for G protein-coupled receptor GPRC6A at the surface of Leydig cells, initiating a signaling response that promotes the expression of enzymes required for testosterone synthesis in a CREB-dependent manner. Also acts as a regulator of brain development: osteocalcin hormone crosses the blood-brain barrier and acts as a ligand for GPR158 on neurons, initiating a signaling response that prevents neuronal apoptosis in the hippocampus, favors the synthesis of all monoamine neurotransmitters and inhibits that of gamma-aminobutyric acid (GABA). Osteocalcin also crosses the placenta during pregnancy and maternal osteocalcin is required for fetal brain development. The chain is Osteocalcin from Pongo pygmaeus (Bornean orangutan).